Here is a 502-residue protein sequence, read N- to C-terminus: ATP synthase subunit alpha (502 aa).

Position 170-177 (170-177) interacts with ATP; the sequence is GDRKTGKT.

Belongs to the ATPase alpha/beta chains family. As to quaternary structure, F-type ATPases have 2 components, CF(1) - the catalytic core - and CF(0) - the membrane proton channel. CF(1) has five subunits: alpha(3), beta(3), gamma(1), delta(1), epsilon(1). CF(0) has four main subunits: a, b, b' and c.

It is found in the cellular thylakoid membrane. The enzyme catalyses ATP + H2O + 4 H(+)(in) = ADP + phosphate + 5 H(+)(out). Functionally, produces ATP from ADP in the presence of a proton gradient across the membrane. The alpha chain is a regulatory subunit. The protein is ATP synthase subunit alpha of Microcystis aeruginosa (strain NIES-843 / IAM M-2473).